We begin with the raw amino-acid sequence, 131 residues long: uncharacterized protein (131 aa).

Positions 1 to 67 (MCSARKLLRG…HSGEPIGDDY (67 aa)) are disordered. Ser14 bears the Phosphoserine mark. A helical membrane pass occupies residues 99–119 (VVVLFFWLMLWFLGLQALGLV).

This sequence belongs to the FAM241 family.

The protein localises to the membrane. This is an uncharacterized protein from Mus musculus (Mouse).